We begin with the raw amino-acid sequence, 295 residues long: Bifunctional protein FolD (295 aa).

NADP(+) is bound by residues 166 to 168, Ser-191, and Ile-232; that span reads GRS.

The protein belongs to the tetrahydrofolate dehydrogenase/cyclohydrolase family. In terms of assembly, homodimer.

It carries out the reaction (6R)-5,10-methylene-5,6,7,8-tetrahydrofolate + NADP(+) = (6R)-5,10-methenyltetrahydrofolate + NADPH. The catalysed reaction is (6R)-5,10-methenyltetrahydrofolate + H2O = (6R)-10-formyltetrahydrofolate + H(+). It functions in the pathway one-carbon metabolism; tetrahydrofolate interconversion. Functionally, catalyzes the oxidation of 5,10-methylenetetrahydrofolate to 5,10-methenyltetrahydrofolate and then the hydrolysis of 5,10-methenyltetrahydrofolate to 10-formyltetrahydrofolate. This chain is Bifunctional protein FolD, found in Rhodopseudomonas palustris (strain BisB5).